Consider the following 1546-residue polypeptide: Hybrid signal transduction histidine kinase D (1546 aa).

Residues 36-63 (MRKQKPDHEKTREELIEEINHLRAVSNS) adopt a coiled-coil conformation. Positions 65 to 131 (KNARIMLDEM…NIDNVREAVH (67 aa)) constitute a PAS domain. In terms of domain architecture, PAC spans 139 to 193 (IRYETEIFGKSAGTEKITIDFSLMPLFNDKGEVSLILPEGRNITEKRLGELEIER). A Histidine kinase 1 domain is found at 218 to 440 (NVSHELRTPL…QFTLRLPLTP (223 aa)). H221 carries the phosphohistidine; by autocatalysis modification. Positions 571-686 (IVLVVEDNPE…ELVARVVNLM (116 aa)) constitute a Response regulatory 1 domain. Residue D619 is modified to 4-aspartylphosphate. Residues 747–1010 (NLSHELRTPL…QFTVVLPIIK (264 aa)) form the Histidine kinase 2 domain. H750 is modified (phosphohistidine; by autocatalysis). 2 stretches are compositionally biased toward low complexity: residues 1013-1031 (SSSN…SPPL) and 1042-1146 (NYIN…SNNN). Disordered stretches follow at residues 1013-1148 (SSSN…NNEK), 1266-1285 (NNSN…PPSS), and 1313-1350 (PLSE…KANS). Positions 1313–1346 (PLSELKSSSNNNNNNNNNSNNNNNNSMSPNLRSP) are enriched in low complexity. A Response regulatory 2 domain is found at 1359–1483 (QIMLVDDLEE…ELSNSILTLI (125 aa)). 4-aspartylphosphate is present on D1412. Residues 1500–1546 (QNNNNNNNNNNNNNNNNNNNNNNINNGNDDDSLLLTDSRPCKKANSQ) are disordered. Residues 1501-1526 (NNNNNNNNNNNNNNNNNNNNNNINNG) show a composition bias toward low complexity.

The catalysed reaction is ATP + protein L-histidine = ADP + protein N-phospho-L-histidine.. Its function is as follows. Acts as a receptor histidine kinase for a signal transduction pathway. This protein undergoes an ATP-dependent autophosphorylation at a conserved histidine residue in the kinase core, and a phosphoryl group is then transferred to a conserved aspartate residue in the receiver domain. The protein is Hybrid signal transduction histidine kinase D (dhkD) of Dictyostelium discoideum (Social amoeba).